A 328-amino-acid polypeptide reads, in one-letter code: Protein MGF 300-4L (328 aa).

Belongs to the asfivirus MGF 300 family.

The sequence is that of Protein MGF 300-4L from Ornithodoros (relapsing fever ticks).